Here is a 365-residue protein sequence, read N- to C-terminus: Peptide chain release factor 2 (365 aa).

At Q252 the chain carries N5-methylglutamine.

Belongs to the prokaryotic/mitochondrial release factor family. In terms of processing, methylated by PrmC. Methylation increases the termination efficiency of RF2.

It is found in the cytoplasm. Its function is as follows. Peptide chain release factor 2 directs the termination of translation in response to the peptide chain termination codons UGA and UAA. The chain is Peptide chain release factor 2 from Escherichia coli O8 (strain IAI1).